A 245-amino-acid chain; its full sequence is Orotidine 5'-phosphate decarboxylase (245 aa).

Residues Asp-22, Lys-44, 71 to 80 (DLKFHDIPNT), Thr-131, Arg-192, Gln-201, Gly-221, and Arg-222 contribute to the substrate site. Lys-73 acts as the Proton donor in catalysis.

The protein belongs to the OMP decarboxylase family. Type 1 subfamily. Homodimer.

The catalysed reaction is orotidine 5'-phosphate + H(+) = UMP + CO2. The protein operates within pyrimidine metabolism; UMP biosynthesis via de novo pathway; UMP from orotate: step 2/2. Its function is as follows. Catalyzes the decarboxylation of orotidine 5'-monophosphate (OMP) to uridine 5'-monophosphate (UMP). The protein is Orotidine 5'-phosphate decarboxylase of Salmonella typhi.